The following is a 410-amino-acid chain: uncharacterized protein (410 aa).

The next 12 helical transmembrane spans lie at 27–47 (ILAL…VQSI), 63–83 (SLAL…TGPL), 97–117 (LFIA…ISIV), 118–138 (LLRA…MTYI), 145–165 (NSLS…GFLG), 180–200 (ISLM…LYFL), 228–248 (VLFF…TIFN), 254–274 (LMLE…TIYL), 293–313 (NNIL…TQYN), 316–332 (FIII…FFAS), 355–375 (YLFF…FFWF), and 378–398 (QWLG…FLSF).

This sequence belongs to the major facilitator superfamily.

It localises to the cell membrane. This is an uncharacterized protein from Buchnera aphidicola subsp. Acyrthosiphon pisum (strain APS) (Acyrthosiphon pisum symbiotic bacterium).